We begin with the raw amino-acid sequence, 215 residues long: Transmembrane protein 267 (215 aa).

3 helical membrane-spanning segments follow: residues 77 to 97 (FCEVALAGFFASIIDLDHFFL), 114 to 134 (PLHCSTLIPVVALALKFLMQL), and 178 to 198 (YWLYVVITASLPSVCSLIMCL).

The protein resides in the membrane. The polypeptide is Transmembrane protein 267 (tmem267) (Xenopus laevis (African clawed frog)).